A 221-amino-acid polypeptide reads, in one-letter code: CDP-diacylglycerol--glycerol-3-phosphate 3-phosphatidyltransferase (221 aa).

The next 5 helical transmembrane spans lie at 8–28 (ILTVLRLLAAPGVAVMFLYFH), 34–54 (WFALTLFILAAVTDFFDGYLA), 75–95 (MVVIALVIITGYSGMNPWLIL), 133–153 (AQMVAIAILFLGTGLEHLEGI), and 187–207 (ATWLGLALIWIAAALTFITGW).

Belongs to the CDP-alcohol phosphatidyltransferase class-I family.

The protein resides in the cell membrane. The catalysed reaction is a CDP-1,2-diacyl-sn-glycerol + sn-glycerol 3-phosphate = a 1,2-diacyl-sn-glycero-3-phospho-(1'-sn-glycero-3'-phosphate) + CMP + H(+). Its pathway is phospholipid metabolism; phosphatidylglycerol biosynthesis; phosphatidylglycerol from CDP-diacylglycerol: step 1/2. In terms of biological role, this protein catalyzes the committed step to the synthesis of the acidic phospholipids. The polypeptide is CDP-diacylglycerol--glycerol-3-phosphate 3-phosphatidyltransferase (pgsA) (Cereibacter sphaeroides (strain ATCC 17023 / DSM 158 / JCM 6121 / CCUG 31486 / LMG 2827 / NBRC 12203 / NCIMB 8253 / ATH 2.4.1.) (Rhodobacter sphaeroides)).